The primary structure comprises 205 residues: Peptidyl-prolyl cis-trans isomerase B (205 aa).

Residues 1-20 (MKFSGLWCWLLLFLSVNVIA) form the signal peptide. The PPIase cyclophilin-type domain occupies 39 to 198 (FFDIEHGEEK…EAVKIAKCGE (160 aa)).

This sequence belongs to the cyclophilin-type PPIase family. PPIase B subfamily.

The protein resides in the secreted. The enzyme catalyses [protein]-peptidylproline (omega=180) = [protein]-peptidylproline (omega=0). Its activity is regulated as follows. Cyclosporin A (CsA) inhibits CYPB. Its function is as follows. PPIases accelerate the folding of proteins. It catalyzes the cis-trans isomerization of proline imidic peptide bonds in oligopeptides. This Saccharomyces cerevisiae (strain ATCC 204508 / S288c) (Baker's yeast) protein is Peptidyl-prolyl cis-trans isomerase B (CPR2).